Consider the following 116-residue polypeptide: Non-specific lipid-transfer protein 8 (116 aa).

Positions 1-24 are cleaved as a signal peptide; it reads MNVLKCLAIISVLGIFFIPRYSES. 4 disulfide bridges follow: C28–C76, C38–C53, C54–C98, and C74–C112.

The protein belongs to the plant LTP family.

Plant non-specific lipid-transfer proteins transfer phospholipids as well as galactolipids across membranes. May play a role in wax or cutin deposition in the cell walls of expanding epidermal cells and certain secretory tissues. This is Non-specific lipid-transfer protein 8 (LTP8) from Arabidopsis thaliana (Mouse-ear cress).